A 140-amino-acid chain; its full sequence is Type II secretion system core protein G (140 aa).

The propeptide at 1–6 (MQRQRG) is leader sequence. At F7 the chain carries N-methylphenylalanine. A helical transmembrane segment spans residues 7-27 (FTLLEIMVVIVILGVLASLVV). Residues 120-140 (LGPDGVPESNDDIGNWTIGKK) form a disordered region.

It belongs to the GSP G family. Type II secretion system is composed of four main components: the outer membrane complex, the inner membrane complex, the cytoplasmic secretion ATPase and the periplasm-spanning pseudopilus. Forms homomultimers. Post-translationally, cleaved by the prepilin peptidase. In terms of processing, methylated by prepilin peptidase at the amino group of the N-terminal phenylalanine once the leader sequence is cleaved.

It localises to the cell inner membrane. Core component of the type II secretion system required for the energy-dependent secretion of extracellular factors such as proteases and toxins from the periplasm. Pseudopilin (pilin-like) protein that polymerizes to form the pseudopilus. Further polymerization triggers pseudopilus growth. The sequence is that of Type II secretion system core protein G (pulG) from Klebsiella pneumoniae.